The primary structure comprises 310 residues: Protein FAM153A (310 aa).

Disordered regions lie at residues 39-58 (LGVP…LCPP), 108-136 (QTNG…HTME), 156-184 (SYNG…DLEE), and 250-297 (TITG…KKSR). Residues 259-268 (SASPSSAPAE) show a composition bias toward low complexity. A compositionally biased stretch (basic and acidic residues) spans 270-282 (ATEKTKVEEEVKT). The span at 283–297 (RKPKKKTRKPSKKSR) shows a compositional bias: basic residues.

Belongs to the FAM153 family.

This Homo sapiens (Human) protein is Protein FAM153A (FAM153A).